A 270-amino-acid polypeptide reads, in one-letter code: MKLSLSPPPYADAPVVVLISGLGGSGSYWLPQLAVLEQEYQVVCYDQRGTGNNPDTLAEDYSIAQMAAELHQALVAAGIERYAVVGHALGALVGMQLALDYPASVTVLVSVNGWLRINAHTRRCFQVREQLLHSGGAQAWVEAQPLFLYPADWMAARAPRLEAEDALALAHFQGKNNLLRRLNALKRADFSRHADRIRCPVQIICASDDLLVPTACSSELHAALPDSQKMVMRYGGHACNVTDPETFNALLLNGLASLLHHREAACKELL.

This sequence belongs to the AB hydrolase superfamily. Hydrolase RutD family.

The catalysed reaction is carbamate + 2 H(+) = NH4(+) + CO2. Functionally, involved in pyrimidine catabolism. May facilitate the hydrolysis of carbamate, a reaction that can also occur spontaneously. In Escherichia coli (strain SMS-3-5 / SECEC), this protein is Putative carbamate hydrolase RutD.